A 319-amino-acid chain; its full sequence is BTB/POZ domain-containing adapter for CUL3-mediated RhoA degradation protein 2 (319 aa).

Residues 31–99 enclose the BTB domain; sequence KYIRLNVGGC…LRDDTIALPK (69 aa).

It belongs to the BACURD family. In terms of assembly, component of the BCR(TNFAIP1) E3 ubiquitin ligase complex, at least composed of cul3, tnfaip1/bacurd2 and rbx1.

Its subcellular location is the cytoplasm. The protein resides in the nucleus. It is found in the endosome. The protein operates within protein modification; protein ubiquitination. In terms of biological role, substrate-specific adapter of a BCR (BTB-CUL3-RBX1) E3 ubiquitin-protein ligase complex involved in regulation of cytoskeleton structure. The BCR(TNFAIP1) E3 ubiquitin ligase complex mediates the ubiquitination of target proteins, leading to their degradation by the proteasome. In Xenopus laevis (African clawed frog), this protein is BTB/POZ domain-containing adapter for CUL3-mediated RhoA degradation protein 2 (tnfaip1).